The chain runs to 266 residues: Probable septum site-determining protein MinC (266 aa).

A compositionally biased stretch (low complexity) spans 1-21; that stretch reads MSEAESTPVEEPVVESTEGSE. The segment at 1–28 is disordered; sequence MSEAESTPVEEPVVESTEGSEAIPEVEQ.

Belongs to the MinC family. Interacts with MinD and FtsZ.

Its function is as follows. Cell division inhibitor that blocks the formation of polar Z ring septums. Rapidly oscillates between the poles of the cell to destabilize FtsZ filaments that have formed before they mature into polar Z rings. Prevents FtsZ polymerization. This Thermosynechococcus vestitus (strain NIES-2133 / IAM M-273 / BP-1) protein is Probable septum site-determining protein MinC.